A 229-amino-acid polypeptide reads, in one-letter code: Large ribosomal subunit protein uL1 (229 aa).

It belongs to the universal ribosomal protein uL1 family. As to quaternary structure, part of the 50S ribosomal subunit.

Its function is as follows. Binds directly to 23S rRNA. The L1 stalk is quite mobile in the ribosome, and is involved in E site tRNA release. Protein L1 is also a translational repressor protein, it controls the translation of the L11 operon by binding to its mRNA. The polypeptide is Large ribosomal subunit protein uL1 (Clostridium tetani (strain Massachusetts / E88)).